Reading from the N-terminus, the 207-residue chain is dTTP/UTP pyrophosphatase (207 aa).

Asp68 serves as the catalytic Proton acceptor.

This sequence belongs to the Maf family. YhdE subfamily. The cofactor is a divalent metal cation.

The protein resides in the cytoplasm. It carries out the reaction dTTP + H2O = dTMP + diphosphate + H(+). The enzyme catalyses UTP + H2O = UMP + diphosphate + H(+). Its function is as follows. Nucleoside triphosphate pyrophosphatase that hydrolyzes dTTP and UTP. May have a dual role in cell division arrest and in preventing the incorporation of modified nucleotides into cellular nucleic acids. This chain is dTTP/UTP pyrophosphatase, found in Staphylothermus marinus (strain ATCC 43588 / DSM 3639 / JCM 9404 / F1).